The primary structure comprises 166 residues: Large ribosomal subunit protein uL10 (166 aa).

It belongs to the universal ribosomal protein uL10 family. Part of the ribosomal stalk of the 50S ribosomal subunit. The N-terminus interacts with L11 and the large rRNA to form the base of the stalk. The C-terminus forms an elongated spine to which L12 dimers bind in a sequential fashion forming a multimeric L10(L12)X complex.

In terms of biological role, forms part of the ribosomal stalk, playing a central role in the interaction of the ribosome with GTP-bound translation factors. The sequence is that of Large ribosomal subunit protein uL10 (rplJ) from Streptococcus pyogenes serotype M18 (strain MGAS8232).